Reading from the N-terminus, the 2365-residue chain is MTEGTLAADEVRVPLGASPSAPAAPVRASPASPGVPGREEQRGSGSSVLAPESPGTECGADLGADEEQPVPYPALAATVFFCLGQTTRPRSWCLRLVSRRWFEHISMLVIMLNCVTLGMFRPCEDVECRSERCSILEAFDDFIFAFFAVEMVIKMVALGLFGQKCYLGDTWNRLDFFIVMAGMMEYSLDGHNVSLSAIRTVRVLRPLRAINRVPSMRILVTLLLDTLPMLGNVLLLCFFVFFIFGIVGVQLWAGLLRNRCFLDSAFVRNNNLTFLRPYYQTEEGEENPFICSSRRDNGMQKCSHIPSRRELRVQCTLGWEAYGQPQAEDGGAGRNACINWNQYYNVCRSGEFNPHNGAINFDNIGYAWIAIFQVITLEGWVDIMYYVMDAHSFYNFIYFILLIIVGSFFMINLCLVVIATQFSETKQRENQLMREQRARYLSNDSTLASFSEPGSCYEELLKYVGHIFRKVKRRSLRLYARWQSRWRKKVDPSSTLHGQGPRRRPRRAGRRTASVHHLVYHHHHHHHHHYHFSHGGPRRPSPEPGAGDTRLVRACVPPSPPSPGHGPPDSESVHSIYHADCHVEGPQERARVAHTIATAASLKLASGLGTMNYPTILPSGAVNSKGSTSSRPKGLRSAGTPGATAHSPLSLGSPSPYEKIQHVVGEQGLGRASSHLSGLSVPCPLPSPQAGTLTCELKSCPYCASALEDPEFEFSGSESGDSDAHGVYEFTQDVRHGDCRDPVQQPHEGGTPGHGNERWRPPLRTASQPGGLGRLWASFSSKLRRIVDSKYFNRGIMAAILVNTLSMGVEYHEQPDELTNALEISNIVFTSMFALEMLLKLLACGPLGYIRNPYNIFDGIVVIISVWEIVGQADGGLSVLRTFRLLRVLKLVRFLPALRRQLVVLMRTMDNVATFCMLLMLFIFIFSILGMHLFGCKFSLKTDSGDTVPDRKNFDSLLWAIVTVFQILTQEDWNVVLYNGMASTSSWAALYFVALMTFGNYVLFNLLVAILVEGFQAEGDATRSDTDEDKTSTHLEEDFDKLRDVQATEMKMYSLAVTPNGHLEGRGSLPPPLITHTAATPMPTPKSSPHLDMAHTLLDSRRSSSGSVDPQLGDQKSLASLRSSPCAPWGPNSAGSSRRSSWNSLGRAPSLKRRSQCGERESLLSGEGKGSTDDEAEDSRPNSGTHPGASPGPRATPLRRAESLGHRSTMDLCPPRPATLLPTKFRDCNGQMVALPSEFFLRIDSHKEDAAEFDDDIEDSCCFRLHKVLEPYAPQWCSSRESWALYLFPPQNRLRVSCQKVIAHKMFDHVVLVFIFLNCITIALERPDIDPGSTERAFLSVSNYIFTAIFVVEMMVKVVALGLLWGEHAYLQSSWNVLDGLLVLVSLVDIIVAVASAGGAKILGVLRVLRLLRTLRPLRVISRAPGLKLVVETLISSLRPIGNIVLICCAFFIIFGILGVQLFKGKFYYCEGTDTRNITTKAECHAAHYRWVRRKYNFDNLGQALMSLFVLSSKDGWVNIMYDGLDAVGIDQQPVQNHNPWMLLYFISFLLIVSFFVLNMFVGVVVENFHKCRQHQEAEEARRREEKRLRRLERRRRSTFPNPEAQRRPYYADYSHTRRSIHSLCTSHYLDLFITFIICLNVITMSMEHYNQPKSLDEALKYCNYVFTIVFVFEAALKLVAFGFRRFFKDRWNQLDLAIVLLSIMGIALEEIEMNAALPINPTIIRIMRVLRIARVLKLLKMATGMRALLDTVVQALPQVGNLGLLFMLLFFIYAALGVELFGRLECSEDNPCEGLSRHATFTNFGMAFLTLFRVSTGDNWNGIMKDTLRECTREDKHCLSYLPALSPVYFVTFVLVAQFVLVNVVVAVLMKHLEESNKEAREDAEMDAEIELEIAQGSTAQPPSTAQESQGTEPDTPNLLVVRKVSVSRMLSLPNDSYMFRPVAPAAAPHSHPLQEVEMETYTGPVTSAHSPSLEPRTSFQVPSAASSPARVSDPLCALSPRDTPRSLSLSRILCRQEAMHAESLEGQIDDAGEDSIPDYTEPAENISMSQAPLGTLRSPPCSPRPASVRTRKHTFGQHCISSRPPTLGGDDAEAADPADEEVSHITSSAHPWPATEPHSPEASPTASPAKGTVGSGRDPHRFCSVDAQSFLDKPGRPDAQRWSSVELDNGDGHLESGEVRARASELEPALGARRKKKMSPPCISIDPPTEDEGSSRPPAAEGGNTTLRRRTPSCEAALHRDCPESTEGPGTGGDPVAKGERWGQASCRAEHLTVPNFAFEPLDMGGPGGDCFLDSDQSVTPEPRVSSLGAIVPLILETELSMPSGDPPEKEQGLYLTVPQTPLKKPGSPPATPAPDDSGDEPV.

The interval 1 to 63 (MTEGTLAADE…PGTECGADLG (63 aa)) is disordered. The Cytoplasmic portion of the chain corresponds to 1–100 (MTEGTLAADE…SWCLRLVSRR (100 aa)). Residues 16–36 (GASPSAPAAPVRASPASPGVP) show a composition bias toward low complexity. The stretch at 87-422 (TRPRSWCLRL…LCLVVIATQF (336 aa)) is one I repeat. The helical transmembrane segment at 101–119 (WFEHISMLVIMLNCVTLGM) threads the bilayer. Residues 120-141 (FRPCEDVECRSERCSILEAFDD) lie on the Extracellular side of the membrane. Position 140 (Asp-140) interacts with Zn(2+). The helical transmembrane segment at 142–160 (FIFAFFAVEMVIKMVALGL) threads the bilayer. Topologically, residues 161–169 (FGQKCYLGD) are cytoplasmic. Residues 170 to 184 (TWNRLDFFIVMAGMM) traverse the membrane as a helical segment. Topologically, residues 185 to 193 (EYSLDGHNV) are extracellular. Zn(2+)-binding residues include Asp-189 and His-191. N-linked (GlcNAc...) asparagine glycosylation occurs at Asn-192. A helical membrane pass occupies residues 194–212 (SLSAIRTVRVLRPLRAINR). Residues 213–232 (VPSMRILVTLLLDTLPMLGN) lie on the Cytoplasmic side of the membrane. A helical membrane pass occupies residues 233-253 (VLLLCFFVFFIFGIVGVQLWA). Residues 254 to 394 (GLLRNRCFLD…YYVMDAHSFY (141 aa)) lie on the Extracellular side of the membrane. Residue Asn-271 is glycosylated (N-linked (GlcNAc...) asparagine). The helical transmembrane segment at 395–419 (NFIYFILLIIVGSFFMINLCLVVIA) threads the bilayer. The Cytoplasmic portion of the chain corresponds to 420-790 (TQFSETKQRE…SKLRRIVDSK (371 aa)). 3 disordered regions span residues 490-573 (VDPS…SESV), 618-656 (PSGAVNSKGSTSSRPKGLRSAGTPGATAHSPLSLGSPSP), and 737-761 (GDCRDPVQQPHEGGTPGHGNERWRP). Residues 500 to 532 (GPRRRPRRAGRRTASVHHLVYHHHHHHHHHYHF) show a composition bias toward basic residues. The segment covering 557 to 566 (PPSPPSPGHG) has biased composition (pro residues). Residues 621-631 (AVNSKGSTSSR) show a composition bias toward polar residues. An II repeat occupies 776–1015 (WASFSSKLRR…LLVAILVEGF (240 aa)). A helical membrane pass occupies residues 791–811 (YFNRGIMAAILVNTLSMGVEY). Residues 812–824 (HEQPDELTNALEI) are Extracellular-facing. The chain crosses the membrane as a helical span at residues 825-846 (SNIVFTSMFALEMLLKLLACGP). Topologically, residues 847-852 (LGYIRN) are cytoplasmic. Residues 853-871 (PYNIFDGIVVIISVWEIVG) form a helical membrane-spanning segment. The Extracellular portion of the chain corresponds to 872 to 879 (QADGGLSV). The chain crosses the membrane as a helical span at residues 880-903 (LRTFRLLRVLKLVRFLPALRRQLV). Topologically, residues 904 to 914 (VLMRTMDNVAT) are cytoplasmic. A helical membrane pass occupies residues 915–935 (FCMLLMLFIFIFSILGMHLFG). Topologically, residues 936–987 (CKFSLKTDSGDTVPDRKNFDSLLWAIVTVFQILTQEDWNVVLYNGMASTSSW) are extracellular. Residues 988-1012 (AALYFVALMTFGNYVLFNLLVAILV) form a helical membrane-spanning segment. Residues 1013–1301 (EGFQAEGDAT…NRLRVSCQKV (289 aa)) lie on the Cytoplasmic side of the membrane. A disordered region spans residues 1059–1215 (PNGHLEGRGS…HRSTMDLCPP (157 aa)). The segment covering 1130 to 1147 (GPNSAGSSRRSSWNSLGR) has biased composition (low complexity). Positions 1199–1209 (RRAESLGHRST) are enriched in basic and acidic residues. An III repeat occupies 1292-1569 (NRLRVSCQKV…MFVGVVVENF (278 aa)). The chain crosses the membrane as a helical span at residues 1302–1324 (IAHKMFDHVVLVFIFLNCITIAL). Topologically, residues 1325–1342 (ERPDIDPGSTERAFLSVS) are extracellular. A helical membrane pass occupies residues 1343–1363 (NYIFTAIFVVEMMVKVVALGL). Residues 1364–1373 (LWGEHAYLQS) are Cytoplasmic-facing. A helical transmembrane segment spans residues 1374–1393 (SWNVLDGLLVLVSLVDIIVA). At 1394–1407 (VASAGGAKILGVLR) the chain is on the extracellular side. Residues 1408–1429 (VLRLLRTLRPLRVISRAPGLKL) traverse the membrane as a helical segment. Residues 1430–1439 (VVETLISSLR) are Cytoplasmic-facing. The chain crosses the membrane as a helical span at residues 1440–1463 (PIGNIVLICCAFFIIFGILGVQLF). At 1464-1540 (KGKFYYCEGT…DQQPVQNHNP (77 aa)) the chain is on the extracellular side. An N-linked (GlcNAc...) asparagine glycan is attached at Asn-1477. Residues 1541–1566 (WMLLYFISFLLIVSFFVLNMFVGVVV) traverse the membrane as a helical segment. At 1567–1627 (ENFHKCRQHQ…RRSIHSLCTS (61 aa)) the chain is on the cytoplasmic side. An IV repeat occupies 1613–1874 (DYSHTRRSIH…VVVAVLMKHL (262 aa)). Residues 1628-1648 (HYLDLFITFIICLNVITMSME) form a helical membrane-spanning segment. Topologically, residues 1649 to 1662 (HYNQPKSLDEALKY) are extracellular. A helical membrane pass occupies residues 1663–1684 (CNYVFTIVFVFEAALKLVAFGF). Topologically, residues 1685 to 1691 (RRFFKDR) are cytoplasmic. Residues 1692-1710 (WNQLDLAIVLLSIMGIALE) form a helical membrane-spanning segment. Residues 1711 to 1724 (EIEMNAALPINPTI) lie on the Extracellular side of the membrane. Residues 1725–1748 (IRIMRVLRIARVLKLLKMATGMRA) form a helical membrane-spanning segment. At 1749-1762 (LLDTVVQALPQVGN) the chain is on the cytoplasmic side. Residues 1763–1783 (LGLLFMLLFFIYAALGVELFG) traverse the membrane as a helical segment. Over 1784–1846 (RLECSEDNPC…KHCLSYLPAL (63 aa)) the chain is Extracellular. A helical transmembrane segment spans residues 1847-1874 (SPVYFVTFVLVAQFVLVNVVVAVLMKHL). Over 1875–2365 (EESNKEARED…APDDSGDEPV (491 aa)) the chain is Cytoplasmic. 2 stretches are compositionally biased toward polar residues: residues 1897–1916 (QGSTAQPPSTAQESQGTEPD) and 1967–1983 (VTSAHSPSLEPRTSFQV). Disordered regions lie at residues 1897 to 1920 (QGSTAQPPSTAQESQGTEPDTPNL), 1967 to 1999 (VTSAHSPSLEPRTSFQVPSAASSPARVSDPLCA), 2053 to 2264 (APLG…GERW), and 2321 to 2365 (ELSM…DEPV). Residues 2092–2102 (DDAEAADPADE) are compositionally biased toward acidic residues. Residues 2172–2187 (GDGHLESGEVRARASE) show a composition bias toward basic and acidic residues.

This sequence belongs to the calcium channel alpha-1 subunit (TC 1.A.1.11) family. CACNA1H subfamily. As to quaternary structure, interacts (via N-terminal cytoplasmic domain) with STAC. In response to raising of intracellular calcium, the T-type channels are activated by CaM-kinase II. As to expression, is highly expressed in lumbosacral and thoracolumbar dorsal root ganglion neurons.

The protein resides in the cell membrane. It carries out the reaction Ca(2+)(in) = Ca(2+)(out). Functionally, voltage-sensitive calcium channel that gives rise to T-type calcium currents. T-type calcium channels belong to the 'low-voltage activated (LVA)' group. A particularity of this type of channel is an opening at quite negative potentials, and a voltage-dependent inactivation. T-type channels serve pacemaking functions in both central neurons and cardiac nodal cells and support calcium signaling in secretory cells and vascular smooth muscle. They may also be involved in the modulation of firing patterns of neurons. In the adrenal zona glomerulosa, participates in the signaling pathway leading to aldosterone production in response to either AGT/angiotensin II, or hyperkalemia. This chain is Voltage-dependent T-type calcium channel subunit alpha-1H (Cacna1h), found in Mus musculus (Mouse).